Reading from the N-terminus, the 266-residue chain is Norfluorocurarine synthase 2 (266 aa).

The region spanning 11–121 (HFVLVHGAGH…IMPDSTHPPI (111 aa)) is the AB hydrolase-1 domain. Catalysis depends on residues S86, D216, and H244.

It belongs to the AB hydrolase superfamily. In terms of assembly, homodimer. As to expression, mainly expressed in roots.

The catalysed reaction is 17-dehydropreakuammicine + H2O = norfluorocurarine + methanol + CO2. Its pathway is alkaloid biosynthesis. Its function is as follows. Hydrolase involved in the biosynthesis of curare monoterpene indole alkaloids (MIAs), natural products such as strychnine, a neurotoxic compound used as a pesticide to control rodents, and its pharmacologically active derivatives, including brucine, used to regulate blood pressure. Curare alkaloids act as animal glycine receptor antagonists. Catalyzes the conversion of dehydropreakuammicine to norfluorocurarine. This is Norfluorocurarine synthase 2 from Strychnos nux-vomica (Poison nut).